A 612-amino-acid polypeptide reads, in one-letter code: Transcription factor ffsR (612 aa).

A compositionally biased stretch (polar residues) spans 1 to 12 (MDTLTAPTTQSE). The segment at 1–21 (MDTLTAPTTQSEQPPPPLTAS) is disordered. Positions 28–60 (CDRCRSHKLRCNRDLMTSTNSPCQRCRKARVKC) form a DNA-binding region, zn(2)-C6 fungal-type. A compositionally biased stretch (basic and acidic residues) spans 73-82 (EELKNGENVH). 3 disordered regions span residues 73–130 (EELK…SMSG), 154–249 (DGST…VTSS), and 451–470 (GQGPPMGPSQGSSSRSTTTN). Polar residues-rich tracts occupy residues 92 to 103 (SHRTASTPSNHA), 154 to 169 (DGSTSGLPMGSHTNGS), and 238 to 249 (LTQQHPAGVTSS). The segment covering 458 to 470 (PSQGSSSRSTTTN) has biased composition (low complexity).

It is found in the nucleus. Transcription factor that specifically regulates the expression of the gene cluster that mediates the biosynthesis of the cytotoxic leucine-containing cytochalasans, including aspochalasin C, aspochalasin E, TMC-169, flavichalasine F, aspergillin PZ, aspochalasin M and flavichalasine G. In Aspergillus flavipes, this protein is Transcription factor ffsR.